Reading from the N-terminus, the 124-residue chain is Small ribosomal subunit protein uS12c (124 aa).

Disordered regions lie at residues 1–28 and 104–124; these read MPTIQQLVRSERHKSSKKTKSPALKGCP and ASGVKDRKKSRSKYGAKQPKT. Basic residues-rich tracts occupy residues 11–20 and 109–124; these read ERHKSSKKTK and DRKKSRSKYGAKQPKT.

It belongs to the universal ribosomal protein uS12 family. In terms of assembly, part of the 30S ribosomal subunit.

The protein resides in the plastid. Its subcellular location is the chloroplast. Its function is as follows. With S4 and S5 plays an important role in translational accuracy. Located at the interface of the 30S and 50S subunits. This Gracilaria tenuistipitata var. liui (Red alga) protein is Small ribosomal subunit protein uS12c (rps12).